Consider the following 57-residue polypeptide: Large ribosomal subunit protein bL32A (57 aa).

The protein belongs to the bacterial ribosomal protein bL32 family.

This Streptomyces coelicolor (strain ATCC BAA-471 / A3(2) / M145) protein is Large ribosomal subunit protein bL32A (rpmF1).